The following is a 239-amino-acid chain: Probable replication-associated protein repA2 (239 aa).

It belongs to the IncFII RepA family.

This protein is essential for plasmid replication; it is involved in copy control functions. This is Probable replication-associated protein repA2 (repA2) from Buchnera aphidicola subsp. Baizongia pistaciae (strain Bp).